The primary structure comprises 320 residues: Calnexin-independence factor 1 (320 aa).

The tract at residues 16–36 is disordered; that stretch reads SAETSVGEKQPKRKRSEVRAE.

It localises to the nucleus. The protein resides in the nucleolus. In terms of biological role, induces a stably inheritable state of calnexin independence called the Cin state when overexpressed. This is Calnexin-independence factor 1 (cif1) from Schizosaccharomyces pombe (strain 972 / ATCC 24843) (Fission yeast).